The chain runs to 118 residues: uncharacterized protein (118 aa).

This sequence to S.pombe tam6.

It is found in the mitochondrion. This is an uncharacterized protein from Saccharomyces cerevisiae (strain ATCC 204508 / S288c) (Baker's yeast).